The sequence spans 508 residues: MLLPMLVSIPFFGGFLCLLFNQKNAKISYYLALTSMALVFILSLILLFNTINVIVSSISNSSWSFEYIVPWIEKFGISFHLAVDRLSILMLNLTSILGLVSVFCSWKKVQKNIGLFYFGLLWTLGSIIGIFISVDLFLFFCFWELSVLPTYFLMIMWGYKDNDRKFYYNNIFSANKFFIYSQISGLVLLLSTLVLVYTHYIYDHILTFDYDVLKHTSMNIVLESCIMLGFFLAFAIKIPIVPFHSWLPDFHCYSPVIGVVDISGILLKTSIYALMRFNIPLFPHSTEIFSSIIMFFGIITIFYGAIVSLFQNNIKRFIAYVSISHMGFILIAIYSINQVAYQGAIIQLISYSLSTAALFLLSGHVFKSISTFDIDKMGGLWSKLRWIPGFLLIFSIINLGVPGTGNFVGEFMIFMGCFNSHLMIVILSIFSLILLALCSLMFVQKICFGPINNRYDFLCDLNVMTICDFLIFVFLLVLILIIGLYPNIIIDVSYSPLCSIRNIFSNFI.

Helical transmembrane passes span 1–21 (MLLP…LLFN), 36–56 (MALV…VIVS), 63–83 (WSFE…HLAV), 86–106 (LSIL…FCSW), 113–133 (IGLF…IFIS), 136–156 (LFLF…LMIM), 177–197 (FFIY…VLVY), 220–240 (IVLE…KIPI), 255–275 (PVIG…YALM), 288–308 (IFSS…AIVS), 317–337 (FIAY…YSIN), 343–363 (GAII…LLSG), 389–409 (GFLL…NFVG), 423–443 (MIVI…LMFV), and 470–490 (LIFV…NIII).

The protein belongs to the complex I subunit 4 family. As to quaternary structure, composed of 13 different subunits. Subunits NuoA, H, J, K, L, M, N constitute the membrane sector of the complex.

The protein localises to the cell membrane. The enzyme catalyses a quinone + NADH + 5 H(+)(in) = a quinol + NAD(+) + 4 H(+)(out). Its function is as follows. NDH-1 shuttles electrons from NADH, via FMN and iron-sulfur (Fe-S) centers, to quinones in the respiratory chain. Couples the redox reaction to proton translocation (for every two electrons transferred, four hydrogen ions are translocated across the cytoplasmic membrane), and thus conserves the redox energy in a proton gradient. The sequence is that of NADH-quinone oxidoreductase subunit M (nuoM) from Buchnera aphidicola subsp. Baizongia pistaciae (strain Bp).